A 93-amino-acid chain; its full sequence is Large ribosomal subunit protein bL27 (93 aa).

The propeptide occupies 1–9 (MLRLDLQFF).

Belongs to the bacterial ribosomal protein bL27 family. The N-terminus is cleaved by ribosomal processing cysteine protease Prp.

The protein is Large ribosomal subunit protein bL27 of Bacillus licheniformis (strain ATCC 14580 / DSM 13 / JCM 2505 / CCUG 7422 / NBRC 12200 / NCIMB 9375 / NCTC 10341 / NRRL NRS-1264 / Gibson 46).